The primary structure comprises 125 residues: Small ribosomal subunit protein uS13 (125 aa).

A disordered region spans residues 94–125 (SLPVRGQRTQTNARTRKGKRKTVAGKKKAVKK). Residues 107 to 125 (RTRKGKRKTVAGKKKAVKK) show a composition bias toward basic residues.

Belongs to the universal ribosomal protein uS13 family. Part of the 30S ribosomal subunit. Forms a loose heterodimer with protein S19. Forms two bridges to the 50S subunit in the 70S ribosome.

Its function is as follows. Located at the top of the head of the 30S subunit, it contacts several helices of the 16S rRNA. In the 70S ribosome it contacts the 23S rRNA (bridge B1a) and protein L5 of the 50S subunit (bridge B1b), connecting the 2 subunits; these bridges are implicated in subunit movement. Contacts the tRNAs in the A and P-sites. This chain is Small ribosomal subunit protein uS13, found in Prosthecochloris aestuarii (strain DSM 271 / SK 413).